Here is a 254-residue protein sequence, read N- to C-terminus: MVIANKNIIFVAGLGGIGFDTSREIVKSGPKNLVILDRIENPAAIAELKALNPKVTVTFYPYDVTVSVAETTKLLKTIFDKLKTVDILINGAGILDDYQIERTIAVNFTGTVNTTTAIMSFWDKRKGGPGGIIANICSVTGFNAIYQVPVYSASKAAALSFTNSLAKLAPITGVTAYSINPGITVTPLVHKFNSWLDVEPRVAELLLEHPTQTRLQCAQNFVKAIEANQNGAIWKLDLGTLEAIEWTKHWDSHI.

10–33 contributes to the NAD(+) binding site; the sequence is FVAGLGGIGFDTSREIVKSGPKNL. Serine 138 is a substrate binding site. Tyrosine 151 (proton acceptor) is an active-site residue.

Belongs to the short-chain dehydrogenases/reductases (SDR) family. Homodimer.

The enzyme catalyses a primary alcohol + NAD(+) = an aldehyde + NADH + H(+). It catalyses the reaction a secondary alcohol + NAD(+) = a ketone + NADH + H(+). The chain is Alcohol dehydrogenase 2 (Adh2) from Drosophila wheeleri (Fruit fly).